We begin with the raw amino-acid sequence, 346 residues long: Uroporphyrinogen decarboxylase (346 aa).

Substrate is bound by residues R21–R25, F40, D71, Y146, S201, and H316.

Belongs to the uroporphyrinogen decarboxylase family. Homodimer.

It is found in the cytoplasm. The enzyme catalyses uroporphyrinogen III + 4 H(+) = coproporphyrinogen III + 4 CO2. The protein operates within porphyrin-containing compound metabolism; protoporphyrin-IX biosynthesis; coproporphyrinogen-III from 5-aminolevulinate: step 4/4. Functionally, catalyzes the decarboxylation of four acetate groups of uroporphyrinogen-III to yield coproporphyrinogen-III. The chain is Uroporphyrinogen decarboxylase from Rickettsia conorii (strain ATCC VR-613 / Malish 7).